Reading from the N-terminus, the 60-residue chain is Conotoxin PnMRCL-022 (60 aa).

The signal sequence occupies residues 1–22 (MRCLPVFVILLLLIASTPSVNA). A propeptide spanning residues 23-45 (RPKTKDLASFHDNAKRTQHIFWS) is cleaved from the precursor.

Belongs to the conotoxin T superfamily. Post-translationally, contains 2 disulfide bonds that can be either 'C1-C3, C2-C4' or 'C1-C4, C2-C3', since these disulfide connectivities have been observed for conotoxins with cysteine framework V (for examples, see AC P0DQQ7 and AC P81755). As to expression, expressed by the venom duct.

It is found in the secreted. This is Conotoxin PnMRCL-022 from Conus pennaceus (Feathered cone).